A 192-amino-acid polypeptide reads, in one-letter code: Xanthine phosphoribosyltransferase (192 aa).

Residues Leu20 and Asn27 each coordinate xanthine. Residue 128-132 (AHGEA) coordinates 5-phospho-alpha-D-ribose 1-diphosphate. Xanthine is bound at residue Lys156.

This sequence belongs to the purine/pyrimidine phosphoribosyltransferase family. Xpt subfamily. In terms of assembly, homodimer.

It is found in the cytoplasm. It carries out the reaction XMP + diphosphate = xanthine + 5-phospho-alpha-D-ribose 1-diphosphate. It participates in purine metabolism; XMP biosynthesis via salvage pathway; XMP from xanthine: step 1/1. Converts the preformed base xanthine, a product of nucleic acid breakdown, to xanthosine 5'-monophosphate (XMP), so it can be reused for RNA or DNA synthesis. This is Xanthine phosphoribosyltransferase from Lactobacillus johnsonii (strain CNCM I-12250 / La1 / NCC 533).